We begin with the raw amino-acid sequence, 237 residues long: Ribosomal RNA small subunit methyltransferase G (237 aa).

Residues G78, F83, 129-130, and R148 each bind S-adenosyl-L-methionine; that span reads AE. The interval 216-237 is disordered; sequence SKKKETPNKYPRKAGTPNKKPL.

This sequence belongs to the methyltransferase superfamily. RNA methyltransferase RsmG family.

It localises to the cytoplasm. In terms of biological role, specifically methylates the N7 position of a guanine in 16S rRNA. This chain is Ribosomal RNA small subunit methyltransferase G, found in Streptococcus agalactiae serotype Ia (strain ATCC 27591 / A909 / CDC SS700).